The sequence spans 485 residues: Probable phosphomannomutase (485 aa).

Ser-86 (phosphoserine intermediate) is an active-site residue. Mg(2+) is bound by residues Ser-86, Asp-236, Asp-238, and Asp-240.

Belongs to the phosphohexose mutase family. Mg(2+) serves as cofactor.

The catalysed reaction is alpha-D-mannose 1-phosphate = D-mannose 6-phosphate. The protein is Probable phosphomannomutase of Haemophilus influenzae (strain ATCC 51907 / DSM 11121 / KW20 / Rd).